We begin with the raw amino-acid sequence, 516 residues long: Acyl-lipid (7-3)-desaturase, chloroplastic (516 aa).

The tract at residues Met1 to Ser25 is disordered. Residues Met1–Arg47 constitute a chloroplast transit peptide. In terms of domain architecture, Cytochrome b5 heme-binding spans Trp83–Pro148. His100 and His123 together coordinate heme. 2 helical membrane-spanning segments follow: residues Gly186–Ala206 and Leu209–Gly229. Positions His227–His231 match the Histidine box-1 motif. A Histidine box-2 motif is present at residues His262–His267. A run of 4 helical transmembrane segments spans residues Met305 to Leu325, Phe354 to Ala374, Gly375 to Pro395, and Val423 to Leu443. Residues Gln444–His448 carry the Histidine box-3 motif.

The protein belongs to the fatty acid desaturase type 1 family. Fe(2+) serves as cofactor.

It is found in the plastid. It localises to the chloroplast membrane. The enzyme catalyses a (7Z,10Z,13Z,16Z,19Z)-docosapentaenoyl-containing glycerolipid + 2 Fe(II)-[cytochrome b5] + O2 + 2 H(+) = a (4Z,7Z,10Z,13Z,16Z,19Z)-docosahexaenoyl-containing glycerolipid + 2 Fe(III)-[cytochrome b5] + 2 H2O. The catalysed reaction is a (7Z,10Z,13Z,16Z)-docosatetraenoyl-containing glycerolipid + 2 Fe(II)-[cytochrome b5] + O2 + 2 H(+) = a (4Z,7Z,10Z,13Z,16Z)-docosapentaenoyl-containing glycerolipid + 2 Fe(III)-[cytochrome b5] + 2 H2O. Functionally, fatty acid desaturase that introduces a cis double bond at the 4-position in 16-carbon polyunsaturated fatty acids that contain a Delta(7) double bond, resulting in the production of 16 carbon fatty acid (7Z,10Z,13Z)-hexadeca-7,10,13-trienoate. This is Acyl-lipid (7-3)-desaturase, chloroplastic from Chlamydomonas reinhardtii (Chlamydomonas smithii).